Consider the following 303-residue polypeptide: tRNA pseudouridine synthase B (303 aa).

The active-site Nucleophile is the Asp-47.

Belongs to the pseudouridine synthase TruB family. Type 1 subfamily.

The catalysed reaction is uridine(55) in tRNA = pseudouridine(55) in tRNA. In terms of biological role, responsible for synthesis of pseudouridine from uracil-55 in the psi GC loop of transfer RNAs. The polypeptide is tRNA pseudouridine synthase B (Legionella pneumophila (strain Paris)).